Reading from the N-terminus, the 191-residue chain is MKKTMSAITAAAAVTSCFTGFGAASFSAPAKAAAQTNTLSENTNQSAAELVKNLYNTAYKGEMPQQAQGLTINKSTKGDVHAAFGEPERPVGGDNRFDLYHWNMGQPGYGFSYHKDMTISEIRYFGTGVERQLNLGGVTPEVLQKQLGPVNRVLTVPFTDEIDYVYDTGRYELHFVIGTDQTADHVNLKAK.

The signal sequence occupies residues 1–23 (MKKTMSAITAAAAVTSCFTGFGA).

This is an uncharacterized protein from Bacillus subtilis (strain 168).